Here is a 181-residue protein sequence, read N- to C-terminus: Ribonuclease HII (181 aa).

The region spanning 1–181 is the RNase H type-2 domain; that stretch reads MICGIDEVGR…SLHRRNFKLI (181 aa). The a divalent metal cation site is built by Asp6, Glu7, and Asp98.

Belongs to the RNase HII family. Mn(2+) serves as cofactor. It depends on Mg(2+) as a cofactor.

It is found in the cytoplasm. The enzyme catalyses Endonucleolytic cleavage to 5'-phosphomonoester.. Endonuclease that specifically degrades the RNA of RNA-DNA hybrids. The protein is Ribonuclease HII of Borrelia garinii subsp. bavariensis (strain ATCC BAA-2496 / DSM 23469 / PBi) (Borreliella bavariensis).